We begin with the raw amino-acid sequence, 203 residues long: Thymidylate kinase (203 aa).

10 to 17 provides a ligand contact to ATP; it reads GMDGAGKS.

This sequence belongs to the thymidylate kinase family.

The enzyme catalyses dTMP + ATP = dTDP + ADP. In terms of biological role, phosphorylation of dTMP to form dTDP in both de novo and salvage pathways of dTTP synthesis. This is Thymidylate kinase from Methylobacillus flagellatus (strain ATCC 51484 / DSM 6875 / VKM B-1610 / KT).